The following is a 349-amino-acid chain: N-formyl peptide receptor 3 (349 aa).

At 1–27 the chain is on the extracellular side; that stretch reads METNFSIPLNETEEVLPEPAGHTVLWI. 2 N-linked (GlcNAc...) asparagine glycosylation sites follow: Asn-4 and Asn-10. The helical transmembrane segment at 28–50 threads the bilayer; sequence FSLLVHGVTFVFGVLGNGLVIWV. Topologically, residues 51–61 are cytoplasmic; the sequence is AGFRMTRTVNT. A helical membrane pass occupies residues 62 to 83; that stretch reads ICYLNLALADFSFSAILPFRMV. Topologically, residues 84-100 are extracellular; it reads SVAMREKWPFGSFLCKL. The cysteines at positions 98 and 176 are disulfide-linked. Residues 101-121 traverse the membrane as a helical segment; the sequence is VHVMIDINLFVSVYLITIIAL. The Cytoplasmic segment spans residues 122–140; sequence DRCICVLHPAWAQNHRTMS. The helical transmembrane segment at 141–162 threads the bilayer; that stretch reads LAKRVMTGLWILTIVLTLPNFI. Topologically, residues 163–205 are extracellular; it reads FWTTIRTTNGDTYCIFNFAFWGDTAVERLNVFITMAKVFLILH. The helical transmembrane segment at 206–226 threads the bilayer; it reads FIIGFSMPMSIITVCYGIIAA. The Cytoplasmic portion of the chain corresponds to 227-242; it reads KIHRNHMIKSSRPLRV. Residues 243 to 266 form a helical membrane-spanning segment; the sequence is FAAVVASFFICWFPYELIGILMAV. Residues 267–286 are Extracellular-facing; sequence WLKEMLLNGKYKIILVLINP. The chain crosses the membrane as a helical span at residues 287–306; sequence TSSLAFFNSCLNPILYVFMG. Residues 307 to 349 lie on the Cytoplasmic side of the membrane; it reads RNFQERLIRSLPTSLERALTEVPDSAQTSNTHTTSASPPEETE. A disordered region spans residues 327 to 349; that stretch reads EVPDSAQTSNTHTTSASPPEETE. Residues 331–343 are compositionally biased toward polar residues; that stretch reads SAQTSNTHTTSAS.

The protein belongs to the G-protein coupled receptor 1 family.

The protein resides in the cell membrane. Functionally, low affinity receptor for N-formyl-methionyl peptides, which are powerful neutrophils chemotactic factors. Binding of FMLP to the receptor causes activation of neutrophils. This response is mediated via a G-protein that activates a phosphatidylinositol-calcium second messenger system. The chain is N-formyl peptide receptor 3 (FPR3) from Pan troglodytes (Chimpanzee).